The primary structure comprises 375 residues: Dual-specificity RNA methyltransferase RlmN (375 aa).

The active-site Proton acceptor is the E94. Residues 100–339 (EDDRATLCVS…VTVRKTRGDD (240 aa)) form the Radical SAM core domain. A disulfide bond links C107 and C344. Residues C114, C118, and C121 each coordinate [4Fe-4S] cluster. S-adenosyl-L-methionine contacts are provided by residues 168–169 (GE), S200, 222–224 (SLH), and N301. C344 (S-methylcysteine intermediate) is an active-site residue.

This sequence belongs to the radical SAM superfamily. RlmN family. Requires [4Fe-4S] cluster as cofactor.

Its subcellular location is the cytoplasm. The enzyme catalyses adenosine(2503) in 23S rRNA + 2 reduced [2Fe-2S]-[ferredoxin] + 2 S-adenosyl-L-methionine = 2-methyladenosine(2503) in 23S rRNA + 5'-deoxyadenosine + L-methionine + 2 oxidized [2Fe-2S]-[ferredoxin] + S-adenosyl-L-homocysteine. The catalysed reaction is adenosine(37) in tRNA + 2 reduced [2Fe-2S]-[ferredoxin] + 2 S-adenosyl-L-methionine = 2-methyladenosine(37) in tRNA + 5'-deoxyadenosine + L-methionine + 2 oxidized [2Fe-2S]-[ferredoxin] + S-adenosyl-L-homocysteine. Specifically methylates position 2 of adenine 2503 in 23S rRNA and position 2 of adenine 37 in tRNAs. m2A2503 modification seems to play a crucial role in the proofreading step occurring at the peptidyl transferase center and thus would serve to optimize ribosomal fidelity. The chain is Dual-specificity RNA methyltransferase RlmN from Vibrio campbellii (strain ATCC BAA-1116).